We begin with the raw amino-acid sequence, 512 residues long: ETS translocation variant 3 (512 aa).

The segment at residues 35–116 is a DNA-binding region (ETS); that stretch reads IQLWHFILEL…KGKRFTYKFN (82 aa). The disordered stretch occupies residues 136 to 222; it reads VPQSAPPVPT…NAIGGGGIGH (87 aa). Phosphoserine occurs at positions 139, 159, and 315. Residues 158-184 show a composition bias toward polar residues; the sequence is HSPTNDVQPGRFSASSLTASGQESSNG. Residues 336 to 512 are disordered; it reads PEESTQFSIK…QGLATAAADA (177 aa). The segment covering 380–406 has biased composition (basic and acidic residues); that stretch reads IKVEPASEKDPESLRQSAREKEEHTQE. Lysine 381 participates in a covalent cross-link: Glycyl lysine isopeptide (Lys-Gly) (interchain with G-Cter in SUMO2). Lysine 388 carries the post-translational modification N6-acetyllysine; alternate. Lysine 388 is covalently cross-linked (Glycyl lysine isopeptide (Lys-Gly) (interchain with G-Cter in SUMO2); alternate). Residues 443–452 show a composition bias toward acidic residues; it reads EPLEVTEDIE. 2 stretches are compositionally biased toward basic and acidic residues: residues 453–468 and 479–491; these read DRPG…KEDA and RWND…ELSK.

This sequence belongs to the ETS family.

It is found in the nucleus. In terms of biological role, transcriptional repressor that contribute to growth arrest during terminal macrophage differentiation by repressing target genes involved in Ras-dependent proliferation. Represses MMP1 promoter activity. In Pan troglodytes (Chimpanzee), this protein is ETS translocation variant 3 (ETV3).